The chain runs to 678 residues: Growth arrest-specific protein 6 (678 aa).

An N-terminal signal peptide occupies residues 1–30; that stretch reads MAPSLSPGPAALRRAPQLLLLLLAAECALA. Positions 53-94 constitute a Gla domain; that stretch reads FEEAKQGHLERECVEELCSREEAREVFENDPETDYFYPRYLD. Cysteine 65 and cysteine 70 are joined by a disulfide. Position 71 is a phosphoserine; by FAM20C (serine 71). Residues 116 to 154 enclose the EGF-like 1; calcium-binding domain; sequence LPDQCTPNPCDRKGTQACQDLMGNFFCLCKAGWGGRLCD. Intrachain disulfides connect cysteine 120/cysteine 133, cysteine 125/cysteine 142, cysteine 144/cysteine 153, cysteine 160/cysteine 171, cysteine 167/cysteine 180, cysteine 182/cysteine 195, cysteine 201/cysteine 212, cysteine 207/cysteine 221, cysteine 223/cysteine 236, cysteine 242/cysteine 251, cysteine 247/cysteine 260, cysteine 262/cysteine 277, cysteine 283/cysteine 570, and cysteine 444/cysteine 470. The 41-residue stretch at 156 to 196 folds into the EGF-like 2; calcium-binding domain; that stretch reads DVNECSQENGGCLQICHNKPGSFHCSCHSGFELSSDGRTCQ. The EGF-like 3; calcium-binding domain maps to 197 to 237; that stretch reads DIDECADSEACGEARCKNLPGSYSCLCDEGFAYSSQEKACR. One can recognise an EGF-like 4; calcium-binding domain in the interval 238-278; the sequence is DVDECLQGRCEQVCVNSPGSYTCHCDGRGGLKLSQDMDTCE. 2 consecutive Laminin G-like domains span residues 298–470 and 477–670; these read GRMF…RMQC and GSFY…AHSC. Residues aspartate 329 and glutamate 331 each contribute to the Ca(2+) site. The N-linked (GlcNAc...) asparagine glycan is linked to asparagine 420. Residue arginine 440 participates in Ca(2+) binding. Threonine 621 and threonine 637 each carry phosphothreonine. Tyrosine 640 is subject to Phosphotyrosine. A disulfide bond links cysteine 643 and cysteine 670. Residue aspartate 656 participates in Ca(2+) binding.

Heterodimer and heterotetramer with AXL. Post-translationally, proteolytically processed after secretion to yield a N-terminal 36 kDa protein and a C-terminal 50 kDa protein including the laminin G-like domains which activates AXL. In terms of processing, gamma-carboxyglutamate residues are formed by vitamin K dependent carboxylation. These residues are essential for the binding of calcium. In terms of tissue distribution, plasma. Isoform 1 and isoform 2 are widely expressed, isoform 1 being expressed at higher levels than isoform 2 in most tissues. Isoform 2 is the predominant form in spleen.

Its subcellular location is the secreted. Functionally, ligand for tyrosine-protein kinase receptors AXL, TYRO3 and MER whose signaling is implicated in cell growth and survival, cell adhesion and cell migration. GAS6/AXL signaling plays a role in various processes such as endothelial cell survival during acidification by preventing apoptosis, optimal cytokine signaling during human natural killer cell development, hepatic regeneration, gonadotropin-releasing hormone neuron survival and migration, platelet activation, or regulation of thrombotic responses. (Microbial infection) Can bridge virus envelope phosphatidylserine to the TAM receptor tyrosine kinase Axl to mediate viral entry by apoptotic mimicry. Plays a role in Dengue cell entry by apoptotic mimicry. Plays a role in Vaccinia virus cell entry by apoptotic mimicry. Plays a role in ebolavirus and marburgvirus cell entry by apoptotic mimicry. The protein is Growth arrest-specific protein 6 of Homo sapiens (Human).